The following is a 172-amino-acid chain: Myosin regulatory light polypeptide 9 (172 aa).

Over residues 1 to 16 the composition is skewed to basic residues; that stretch reads MSSKRAKAKTTKKRPQ. A disordered region spans residues 1 to 20; that stretch reads MSSKRAKAKTTKKRPQRATS. Ser2 carries the post-translational modification N-acetylserine. A Phosphothreonine; by MLCK, CIT and ROCK2 modification is found at Thr19. Position 20 is a phosphoserine; by CDC42BP, CIT, MLCK, PAK1, ROCK1, ROCK2, DAPK1, DAPK2 and ZIPK/DAPK3 (Ser20). 3 EF-hand domains span residues 29 to 64, 98 to 133, and 134 to 169; these read SQIQ…LGKN, DPED…MGDR, and FTDE…GAKD. The Ca(2+) site is built by Asp42, Asn44, Asp46, and Asp53.

As to quaternary structure, myosin is a hexamer of 2 heavy chains and 4 light chains: interacts with myosin heavy chain MYO19. Interacts with LUZP1; the interaction results in inhibition of phosphorylation of MYL9 by DAPK3. Phosphorylation increases the actin-activated myosin ATPase activity and thereby regulates the contractile activity. It is required to generate the driving force in the migration of the cells but not necessary for localization of myosin-2 at the leading edge. Phosphorylation is required for myotube formation. Phosphorylated by DAPK3; DAPK3-mediated phosphorylation is inhibited by LUZP1. In terms of tissue distribution, smooth muscle tissues and in some, but not all, nonmuscle cells.

Its subcellular location is the cytoplasm. It localises to the cytoskeleton. The protein resides in the cell cortex. Myosin regulatory subunit that plays an important role in regulation of both smooth muscle and nonmuscle cell contractile activity via its phosphorylation. Implicated in cytokinesis, receptor capping, and cell locomotion. In myoblasts, may regulate PIEZO1-dependent cortical actomyosin assembly involved in myotube formation. The sequence is that of Myosin regulatory light polypeptide 9 (MYL9) from Homo sapiens (Human).